A 501-amino-acid chain; its full sequence is Ribonuclease Y (501 aa).

The helical transmembrane segment at 7 to 27 (LVVIALLGALTLLTAGHVLAL) threads the bilayer. Residues 190-256 (VVRAVPLPEE…RLTLEKLVAD (67 aa)) form the KH domain. One can recognise an HD domain in the interval 316-409 (VLAHLVESAH…TQAADAISGG (94 aa)).

The protein belongs to the RNase Y family.

It localises to the cell membrane. In terms of biological role, endoribonuclease that initiates mRNA decay. This chain is Ribonuclease Y, found in Thermobifida fusca (strain YX).